The sequence spans 67 residues: ATP synthase F(0) complex subunit 8 (67 aa).

Residues 8–24 traverse the membrane as a helical segment; sequence TWFIMIFSMFLTLFILF. N6-acetyllysine; alternate is present on Lys54. Lys54 carries the post-translational modification N6-succinyllysine; alternate. N6-acetyllysine is present on Lys57.

This sequence belongs to the ATPase protein 8 family. In terms of assembly, component of the ATP synthase complex composed at least of ATP5F1A/subunit alpha, ATP5F1B/subunit beta, ATP5MC1/subunit c (homooctomer), MT-ATP6/subunit a, MT-ATP8/subunit 8, ATP5ME/subunit e, ATP5MF/subunit f, ATP5MG/subunit g, ATP5MK/subunit k, ATP5MJ/subunit j, ATP5F1C/subunit gamma, ATP5F1D/subunit delta, ATP5F1E/subunit epsilon, ATP5PF/subunit F6, ATP5PB/subunit b, ATP5PD/subunit d, ATP5PO/subunit OSCP. ATP synthase complex consists of a soluble F(1) head domain (subunits alpha(3) and beta(3)) - the catalytic core - and a membrane F(0) domain - the membrane proton channel (subunits c, a, 8, e, f, g, k and j). These two domains are linked by a central stalk (subunits gamma, delta, and epsilon) rotating inside the F1 region and a stationary peripheral stalk (subunits F6, b, d, and OSCP). Interacts with PRICKLE3.

It is found in the mitochondrion membrane. Its function is as follows. Subunit 8, of the mitochondrial membrane ATP synthase complex (F(1)F(0) ATP synthase or Complex V) that produces ATP from ADP in the presence of a proton gradient across the membrane which is generated by electron transport complexes of the respiratory chain. ATP synthase complex consist of a soluble F(1) head domain - the catalytic core - and a membrane F(1) domain - the membrane proton channel. These two domains are linked by a central stalk rotating inside the F(1) region and a stationary peripheral stalk. During catalysis, ATP synthesis in the catalytic domain of F(1) is coupled via a rotary mechanism of the central stalk subunits to proton translocation. In vivo, can only synthesize ATP although its ATP hydrolase activity can be activated artificially in vitro. Part of the complex F(0) domain. This Canis lupus familiaris (Dog) protein is ATP synthase F(0) complex subunit 8.